Here is a 443-residue protein sequence, read N- to C-terminus: Nuclear hormone receptor family member nhr-60 (443 aa).

The span at 1 to 20 (MIQSSSSISQDSLDLPSILS) shows a compositional bias: low complexity. The segment at 1 to 40 (MIQSSSSISQDSLDLPSILSTFSADEPEDEPSPTAVKSTK) is disordered. The nuclear receptor DNA-binding region spans 44–121 (PTECLICGNS…VGMNPLAMEV (78 aa)). 2 consecutive NR C4-type zinc fingers follow at residues 47 to 67 (CLIC…CNGC) and 83 to 104 (CKAK…CRAC). Residues 196-439 (NEFSGLEYLL…KDLVMRVIED (244 aa)) enclose the NR LBD domain. A disordered region spans residues 225-249 (LRRDQLGPPRLPKPPSPGKPRDSQH). A compositionally biased stretch (pro residues) spans 233-242 (PRLPKPPSPG).

The protein belongs to the nuclear hormone receptor family.

Its subcellular location is the nucleus. Its function is as follows. Orphan nuclear receptor (Potential). Required for embryonic and larval morphogenesis and probably for seam cell positioning and migration. In Caenorhabditis elegans, this protein is Nuclear hormone receptor family member nhr-60.